A 73-amino-acid chain; its full sequence is Aminopeptidase G (73 aa).

The disordered stretch occupies residues 39 to 73; sequence GRRAASSSWPGRGSSRRWRPGRRTGAAARGCWRAP. Composition is skewed to low complexity over residues 42–51 and 61–73; these read AASSSWPGRG and RTGA…WRAP.

Belongs to the peptidase M1 family. Zn(2+) serves as cofactor.

The protein resides in the cytoplasm. Hydrolyzes preferentially the N-terminal glycine and can also hydrolyze other amino acids which are used by PepN but is unable to hydrolyze basic amino acids. The protein is Aminopeptidase G (pepG) of Streptomyces lividans.